A 461-amino-acid chain; its full sequence is Coronin-1A (461 aa).

At serine 2 the chain carries N-acetylserine. Serine 2 is modified (phosphoserine; by PKC). 7 WD repeats span residues 13–63 (HVFG…LVLP), 73–110 (NVPM…MVWE), 123–160 (PVVT…LVWD), 164–204 (GVAV…RIIE), 207–251 (KGTI…ALWD), 258–296 (PLSL…RYFE), and 302–349 (PFLH…EPIA). Residues 404-418 (LRVNRGLDTGRKRTT) show a composition bias toward basic and acidic residues. The segment at 404-429 (LRVNRGLDTGRKRTTPEASGAPSSDA) is disordered. Threonine 412 bears the Phosphothreonine; by PKC mark. At threonine 418 the chain carries Phosphothreonine. The residue at position 422 (serine 422) is a Phosphoserine. Residues 424–460 (APSSDAISRLEEEMRKLQATVQELQKRLDRLEETVQA) are a coiled coil. At lysine 449 the chain carries N6-acetyllysine.

The protein belongs to the WD repeat coronin family. Binds actin. Phosphorylation at Thr-412 by PKC strongly down-regulates the association with actin. In terms of processing, polyubiquitinated by RNF128 with 'Lys-48'-linked chains, leading to proteasomal degradation. Expressed in brain, thymus, spleen, bone marrow and lymph node. Low in lung and gut.

It localises to the cytoplasm. The protein resides in the cytoskeleton. The protein localises to the cell cortex. Its subcellular location is the cytoplasmic vesicle. It is found in the phagosome membrane. May be a crucial component of the cytoskeleton of highly motile cells, functioning both in the invagination of large pieces of plasma membrane, as well as in forming protrusions of the plasma membrane involved in cell locomotion. In mycobacteria-infected macrophages, its retention on the phagosomal membrane prevents fusion between phagosomes and lysosomes. The polypeptide is Coronin-1A (CORO1A) (Bos taurus (Bovine)).